Consider the following 356-residue polypeptide: MNAARTGYRVFSANSTAACTELAKRITERLGAELGKSVVYQETNGETRVEIQESVRGQDIFIIQTIPRDVNTAVMELLIMAYALKTACARNIIGVIPYFPYSKQSKMRKRGSIVCKLLASMLAKAGLTHIITMDLHQKEIQGFFSFPVDNLRASPFLLQYIQEEIPNYRNAVIVAKSPDAAKRAQSYAERLRLGLAVIHGEAQCAEMDMDDGRHSPPMVKNATVHPGLELPLMMAKEKPPITVVGDVGGRIAIIVDDIIDDVESFVAAAEILKERGAYRIYVMATHGILSAEAPRLIEESSIDEVVVTNTVPHEVQKLQCPKIKTVDISLILSEAIRRIHNGESMAYLFRNITVDD.

An N-acetylmethionine modification is found at Met1. Residues Ser177 and Ser215 each carry the phosphoserine modification.

It belongs to the ribose-phosphate pyrophosphokinase family. As to quaternary structure, binds to PRPS1 and PRPS2.

Functionally, seems to play a negative regulatory role in 5-phosphoribose 1-diphosphate synthesis. The protein is Phosphoribosyl pyrophosphate synthase-associated protein 1 (PRPSAP1) of Bos taurus (Bovine).